A 64-amino-acid polypeptide reads, in one-letter code: DNA-binding protein 7d (64 aa).

N6-methyllysine is present on residues K5, K7, K61, K63, and K64.

Belongs to the 7 kDa DNA-binding/endoribonuclease P2 family. Monomer.

Its subcellular location is the cytoplasm. In terms of biological role, can constrain negative DNA supercoils. May be involved in maintaining the integrity of the genome at high temperature. Stimulates the Holliday junction cleavage activity of Hjc. This is DNA-binding protein 7d (sso7d) from Saccharolobus solfataricus (strain ATCC 35092 / DSM 1617 / JCM 11322 / P2) (Sulfolobus solfataricus).